A 745-amino-acid chain; its full sequence is Cysteine protease atg4 (745 aa).

3 stretches are compositionally biased toward low complexity: residues Gln29–Gln42, Ser52–Thr64, and Asn194–Asn215. 2 disordered regions span residues Gln29 to Asn68 and Phe192 to Asn215. Cys262 functions as the Nucleophile in the catalytic mechanism. 2 disordered regions span residues Leu344–Glu363 and Gln439–Asn480. Positions Gln439–Asn477 are enriched in low complexity. Catalysis depends on residues Asp562 and His564. The interval His686–Gly745 is disordered. Over residues Pro688–Pro719 the composition is skewed to low complexity. Positions Ser734–Gly745 are enriched in acidic residues.

It belongs to the peptidase C54 family.

The protein localises to the cytoplasm. The enzyme catalyses [protein]-C-terminal L-amino acid-glycyl-phosphatidylethanolamide + H2O = [protein]-C-terminal L-amino acid-glycine + a 1,2-diacyl-sn-glycero-3-phosphoethanolamine. In terms of biological role, cysteine protease that plays a key role in autophagy by mediating both proteolytic activation and delipidation of ATG8 family proteins. The protease activity is required for proteolytic activation of ATG8 family proteins: cleaves the C-terminal amino acid of ATG8 proteins to reveal a C-terminal glycine. Exposure of the glycine at the C-terminus is essential for ATG8 proteins conjugation to phosphatidylethanolamine (PE) and insertion to membranes, which is necessary for autophagy. In addition to the protease activity, also mediates delipidation of PE-conjugated ATG8 proteins. The polypeptide is Cysteine protease atg4 (atg4-1) (Dictyostelium discoideum (Social amoeba)).